Reading from the N-terminus, the 420-residue chain is Histidine--tRNA ligase (420 aa).

This sequence belongs to the class-II aminoacyl-tRNA synthetase family. In terms of assembly, homodimer.

It is found in the cytoplasm. The enzyme catalyses tRNA(His) + L-histidine + ATP = L-histidyl-tRNA(His) + AMP + diphosphate + H(+). The polypeptide is Histidine--tRNA ligase (Ureaplasma parvum serovar 3 (strain ATCC 27815 / 27 / NCTC 11736)).